A 592-amino-acid polypeptide reads, in one-letter code: Multidrug transporter AQR1 (592 aa).

The tract at residues 1-77 (MVESGPHSIN…EISSTHSQDA (77 aa)) is disordered. Residues 99–119 (WCMVALLTACGFWSSLGSPIY) traverse the membrane as a helical segment. Residue Asn138 is glycosylated (N-linked (GlcNAc...) asparagine). Transmembrane regions (helical) follow at residues 139-159 (ITVV…GGLA), 166-186 (PVLL…ACAP), 188-208 (YGVI…SIAI), 231-251 (GFVL…AAAW), and 255-275 (AIFW…FALL). The N-linked (GlcNAc...) asparagine glycan is linked to Asn285. 6 helical membrane-spanning segments follow: residues 340-360 (IFLS…MLSA), 374-394 (LTII…GSFA), 432-452 (LQSV…FGWS), 459-479 (IPSI…TLSA), 497-517 (SCFN…FAKM), and 523-543 (VGGT…LMFI).

It belongs to the major facilitator superfamily. CAR1 family.

It is found in the cell membrane. Multidrug transporter acts as a determinant of resistance to acetic acid, flucytosine and clotrimazole, these 3 compounds acting synergistically against the pathogen. Reduces the intracellular accumulation of the antifungal agents flucytosine and, to a moderate extent, of clotrimazole. Its role in acetic acid resistance may be indirect, presumably through the transport of a still unidentified physiological substrate. In Candida glabrata (strain ATCC 2001 / BCRC 20586 / JCM 3761 / NBRC 0622 / NRRL Y-65 / CBS 138) (Yeast), this protein is Multidrug transporter AQR1.